A 277-amino-acid polypeptide reads, in one-letter code: Carbonyl reductase [NADPH] 1 (277 aa).

Ser2 is modified (N-acetylserine). Ser2 and Ser30 each carry phosphoserine. NADP(+)-binding positions include 10–34, 63–64, and Asn90; these read VTGG…GDVV and DI. Glutathione is bound by residues 95-97 and Gln106; that span reads FKV. Ser140 contributes to the substrate binding site. 193–194 is a glutathione binding site; that stretch reads AY. Tyr194 serves as the catalytic Proton acceptor. Residues 194-198 and 231-233 contribute to the NADP(+) site; these read YGVTK and VRT. Lys239 carries the N6-1-carboxyethyl lysine modification.

It belongs to the short-chain dehydrogenases/reductases (SDR) family. As to quaternary structure, monomer.

It localises to the cytoplasm. It carries out the reaction a secondary alcohol + NADP(+) = a ketone + NADPH + H(+). The enzyme catalyses prostaglandin F2alpha + NADP(+) = prostaglandin E2 + NADPH + H(+). The catalysed reaction is prostaglandin E1 + NADP(+) = 15-oxoprostaglandin E1 + NADPH + H(+). It catalyses the reaction menadione + NADPH + H(+) = menadiol + NADP(+). It carries out the reaction prostaglandin D2 + NADP(+) = 15-oxoprostaglandin D2 + NADPH + H(+). The enzyme catalyses prostaglandin E2 + NADP(+) = 15-oxoprostaglandin E2 + NADPH + H(+). The catalysed reaction is prostaglandin F2alpha + NADP(+) = 15-oxoprostaglandin F2alpha + NADPH + H(+). It catalyses the reaction daunorubicin + NADPH + H(+) = 13-dihydrodaunorubicin + NADP(+). It carries out the reaction S-nitrosoglutathione + NADPH + H(+) = S-(hydroxysulfenamide)glutathione + NADP(+). The enzyme catalyses a primary alcohol + NADP(+) = an aldehyde + NADPH + H(+). The catalysed reaction is cortisol + NADPH + H(+) = 20beta-dihydrocortisol + NADP(+). It catalyses the reaction corticosterone + NADPH + H(+) = 20beta-dihydrocorticosterone + NADP(+). NADPH-dependent reductase with broad substrate specificity. Catalyzes the reduction of a wide variety of carbonyl compounds including quinones, prostaglandins, menadione, plus various xenobiotics. Catalyzes the reduction of the antitumor anthracyclines doxorubicin and daunorubicin to the cardiotoxic compounds doxorubicinol and daunorubicinol. Can convert prostaglandin E to prostaglandin F2-alpha. Can bind glutathione, which explains its higher affinity for glutathione-conjugated substrates. Catalyzes the reduction of S-nitrosoglutathione. In addition, participates in the glucocorticoid metabolism by catalyzing the NADPH-dependent cortisol/corticosterone into 20beta-dihydrocortisol (20b-DHF) or 20beta-corticosterone (20b-DHB), which are weak agonists of NR3C1 and NR3C2 in adipose tissue. The chain is Carbonyl reductase [NADPH] 1 from Pongo abelii (Sumatran orangutan).